The primary structure comprises 382 residues: tRNA-specific 2-thiouridylase MnmA (382 aa).

Residues 18–25 (AMSGGVDS) and Leu44 each bind ATP. Catalysis depends on Cys112, which acts as the Nucleophile. Cys112 and Cys209 form a disulfide bridge. Residue Gly136 coordinates ATP. An interaction with tRNA region spans residues 159 to 161 (RDQ). Cys209 acts as the Cysteine persulfide intermediate in catalysis.

This sequence belongs to the MnmA/TRMU family.

It is found in the cytoplasm. It carries out the reaction S-sulfanyl-L-cysteinyl-[protein] + uridine(34) in tRNA + AH2 + ATP = 2-thiouridine(34) in tRNA + L-cysteinyl-[protein] + A + AMP + diphosphate + H(+). In terms of biological role, catalyzes the 2-thiolation of uridine at the wobble position (U34) of tRNA, leading to the formation of s(2)U34. In Methylobacterium sp. (strain 4-46), this protein is tRNA-specific 2-thiouridylase MnmA.